Here is a 157-residue protein sequence, read N- to C-terminus: Crossover junction endodeoxyribonuclease RuvC (157 aa).

Residues D7, E66, and D139 contribute to the active site. Mg(2+) contacts are provided by D7, E66, and D139.

The protein belongs to the RuvC family. As to quaternary structure, homodimer which binds Holliday junction (HJ) DNA. The HJ becomes 2-fold symmetrical on binding to RuvC with unstacked arms; it has a different conformation from HJ DNA in complex with RuvA. In the full resolvosome a probable DNA-RuvA(4)-RuvB(12)-RuvC(2) complex forms which resolves the HJ. Mg(2+) serves as cofactor.

Its subcellular location is the cytoplasm. The enzyme catalyses Endonucleolytic cleavage at a junction such as a reciprocal single-stranded crossover between two homologous DNA duplexes (Holliday junction).. Its function is as follows. The RuvA-RuvB-RuvC complex processes Holliday junction (HJ) DNA during genetic recombination and DNA repair. Endonuclease that resolves HJ intermediates. Cleaves cruciform DNA by making single-stranded nicks across the HJ at symmetrical positions within the homologous arms, yielding a 5'-phosphate and a 3'-hydroxyl group; requires a central core of homology in the junction. The consensus cleavage sequence is 5'-(A/T)TT(C/G)-3'. Cleavage occurs on the 3'-side of the TT dinucleotide at the point of strand exchange. HJ branch migration catalyzed by RuvA-RuvB allows RuvC to scan DNA until it finds its consensus sequence, where it cleaves and resolves the cruciform DNA. Functionally, required for efficient infection in a mouse model system. The polypeptide is Crossover junction endodeoxyribonuclease RuvC (Helicobacter pylori (strain G27)).